The primary structure comprises 387 residues: Cysteine desulfurase IscS (387 aa).

Pyridoxal 5'-phosphate is bound by residues 73–74 (AT), Asn-155, Gln-183, and 203–205 (SAH). Position 206 is an N6-(pyridoxal phosphate)lysine (Lys-206). Thr-241 serves as a coordination point for pyridoxal 5'-phosphate. Cys-328 serves as the catalytic Cysteine persulfide intermediate. [2Fe-2S] cluster is bound at residue Cys-328.

The protein belongs to the class-V pyridoxal-phosphate-dependent aminotransferase family. NifS/IscS subfamily. Homodimer. Forms a heterotetramer with IscU, interacts with other sulfur acceptors. Requires pyridoxal 5'-phosphate as cofactor.

The protein localises to the cytoplasm. It carries out the reaction (sulfur carrier)-H + L-cysteine = (sulfur carrier)-SH + L-alanine. Its pathway is cofactor biosynthesis; iron-sulfur cluster biosynthesis. Master enzyme that delivers sulfur to a number of partners involved in Fe-S cluster assembly, tRNA modification or cofactor biosynthesis. Catalyzes the removal of elemental sulfur atoms from cysteine to produce alanine. Functions as a sulfur delivery protein for Fe-S cluster synthesis onto IscU, an Fe-S scaffold assembly protein, as well as other S acceptor proteins. In Helicobacter pylori (strain Shi470), this protein is Cysteine desulfurase IscS.